The sequence spans 425 residues: ADP-ribose glycohydrolase MACROD2 (425 aa).

The Macro domain occupies 59 to 240 (QETSQVKKSL…IYKKKMNEFF (182 aa)). Substrate is bound by residues 77–79 (GDI), 90–92 (AAN), and 97–102 (GGGGVD). A Glycyl lysine isopeptide (Lys-Gly) (interchain with G-Cter in ubiquitin) cross-link involves residue lysine 170. Residues 185-191 (ISTGIYG) and phenylalanine 224 contribute to the substrate site. The disordered stretch occupies residues 243–425 (DDNNEEEEDV…EAKEQRNGTK (183 aa)). A compositionally biased stretch (acidic residues) spans 244–262 (DNNEEEEDVEMKEDSDENG). The span at 302-343 (EDFAKDENITKGGEVTDHSVRDQDHPDGQENDSTKNEIKIET) shows a compositional bias: basic and acidic residues. Residues 344–360 (ESQSSYMETEELSSNQE) show a composition bias toward polar residues. 2 stretches are compositionally biased toward basic and acidic residues: residues 381 to 391 (EGEKAPGEDTP) and 415 to 425 (DEAKEQRNGTK).

Belongs to the MacroD-type family. MacroD1/2-like subfamily. Interacts with ADP-ribosylated PARP1.

It is found in the nucleus. It carries out the reaction 2''-O-acetyl-ADP-D-ribose + H2O = ADP-D-ribose + acetate + H(+). It catalyses the reaction 4-O-(ADP-D-ribosyl)-L-aspartyl-[protein] + H2O = L-aspartyl-[protein] + ADP-D-ribose + H(+). The catalysed reaction is 5-O-(ADP-D-ribosyl)-L-glutamyl-[protein] + H2O = L-glutamyl-[protein] + ADP-D-ribose + H(+). The enzyme catalyses alpha-NAD(+) + H2O = ADP-D-ribose + nicotinamide + H(+). Its activity is regulated as follows. Subject to product inhibition by ADP-ribose. Its function is as follows. Removes ADP-ribose from aspartate and glutamate residues in proteins bearing a single ADP-ribose moiety. Inactive towards proteins bearing poly-ADP-ribose. Deacetylates O-acetyl-ADP ribose, a signaling molecule generated by the deacetylation of acetylated lysine residues in histones and other proteins. In Homo sapiens (Human), this protein is ADP-ribose glycohydrolase MACROD2.